The primary structure comprises 388 residues: Phosphoribosylformylglycinamidine cyclo-ligase, chloroplastic/mitochondrial (388 aa).

This sequence belongs to the AIR synthase family.

The protein resides in the plastid. It is found in the chloroplast. The protein localises to the mitochondrion. It carries out the reaction 2-formamido-N(1)-(5-O-phospho-beta-D-ribosyl)acetamidine + ATP = 5-amino-1-(5-phospho-beta-D-ribosyl)imidazole + ADP + phosphate + H(+). It participates in purine metabolism; IMP biosynthesis via de novo pathway; 5-amino-1-(5-phospho-D-ribosyl)imidazole from N(2)-formyl-N(1)-(5-phospho-D-ribosyl)glycinamide: step 2/2. The polypeptide is Phosphoribosylformylglycinamidine cyclo-ligase, chloroplastic/mitochondrial (PUR5) (Vigna unguiculata (Cowpea)).